A 283-amino-acid polypeptide reads, in one-letter code: Peroxisomal protein 2 (283 aa).

The Peroxisomal target signal 1 (PTS1) motif lies at 281–283 (VKL).

Belongs to the PXP2 family.

The protein resides in the peroxisome matrix. It is found in the cytoplasm. It localises to the cytosol. Its function is as follows. Probably involved in peroxisome formation or maintenance as well as in amino acid metabolism. The protein is Peroxisomal protein 2 of Saccharomyces cerevisiae (strain ATCC 204508 / S288c) (Baker's yeast).